Consider the following 901-residue polypeptide: Mediator of RNA polymerase II transcription subunit 14 (901 aa).

Belongs to the Mediator complex subunit 14 family. In terms of assembly, component of the Mediator complex.

It localises to the nucleus. In terms of biological role, component of the Mediator complex, a coactivator involved in the regulated transcription of nearly all RNA polymerase II-dependent genes. Mediator functions as a bridge to convey information from gene-specific regulatory proteins to the basal RNA polymerase II transcription machinery. Mediator is recruited to promoters by direct interactions with regulatory proteins and serves as a scaffold for the assembly of a functional preinitiation complex with RNA polymerase II and the general transcription factors. In Yarrowia lipolytica (strain CLIB 122 / E 150) (Yeast), this protein is Mediator of RNA polymerase II transcription subunit 14 (RGR1).